We begin with the raw amino-acid sequence, 315 residues long: Zinc transport protein ZntB (315 aa).

At 1–250 the chain is on the cytoplasmic side; sequence MGFMIEHWDF…RDEKTNKNSY (250 aa). Residues 251–271 form a helical membrane-spanning segment; sequence LFTLVATIFLPTSFLTGLLGI. Over 272–282 the chain is Periplasmic; the sequence is NIGGMPGVESS. The chain crosses the membrane as a helical span at residues 283–303; sequence MAFTWFCIALIVIFGLEWLLF. At 304-315 the chain is on the cytoplasmic side; that stretch reads KRLGFTNKTDDE.

Belongs to the CorA metal ion transporter (MIT) (TC 1.A.35) family. As to quaternary structure, homopentamer. Can assemble pentamers in the absence of the transmembrane regions.

The protein resides in the cell inner membrane. It carries out the reaction Zn(2+)(out) + H(+)(out) = Zn(2+)(in) + H(+)(in). Functionally, zinc transporter. Acts as a Zn(2+):proton symporter, which likely mediates zinc ion uptake. In Vibrio parahaemolyticus serotype O3:K6 (strain RIMD 2210633), this protein is Zinc transport protein ZntB.